The primary structure comprises 60 residues: Large ribosomal subunit protein uL30 (60 aa).

It belongs to the universal ribosomal protein uL30 family. As to quaternary structure, part of the 50S ribosomal subunit.

The protein is Large ribosomal subunit protein uL30 of Streptococcus thermophilus (strain CNRZ 1066).